The following is a 147-amino-acid chain: Large ribosomal subunit protein uL13 (147 aa).

This sequence belongs to the universal ribosomal protein uL13 family. Part of the 50S ribosomal subunit.

This protein is one of the early assembly proteins of the 50S ribosomal subunit, although it is not seen to bind rRNA by itself. It is important during the early stages of 50S assembly. The chain is Large ribosomal subunit protein uL13 from Pseudarthrobacter chlorophenolicus (strain ATCC 700700 / DSM 12829 / CIP 107037 / JCM 12360 / KCTC 9906 / NCIMB 13794 / A6) (Arthrobacter chlorophenolicus).